We begin with the raw amino-acid sequence, 273 residues long: Type IV secretion system protein PtlF (273 aa).

An N-terminal signal peptide occupies residues 1 to 20 (MMAARMMAAGLAATALSAHA).

This sequence belongs to the TrbG/VirB9 family. Forms a complex with PtlI.

It is found in the cell outer membrane. Its function is as follows. Component of the type IV secretion system ptl required for secretion of assembled pertussis toxin (PTX) through the outer membrane. The protein is Type IV secretion system protein PtlF (ptlF) of Bordetella pertussis (strain Tohama I / ATCC BAA-589 / NCTC 13251).